The following is a 475-amino-acid chain: Cysteine--tRNA ligase (475 aa).

Cys-28 serves as a coordination point for Zn(2+). Residues 30 to 40 (PTVYDYAHIGN) carry the 'HIGH' region motif. Zn(2+) is bound by residues Cys-213, His-238, and Glu-242. Residues 270–274 (KMSKS) carry the 'KMSKS' region motif. Lys-273 contributes to the ATP binding site.

This sequence belongs to the class-I aminoacyl-tRNA synthetase family. As to quaternary structure, monomer. Requires Zn(2+) as cofactor.

It localises to the cytoplasm. The enzyme catalyses tRNA(Cys) + L-cysteine + ATP = L-cysteinyl-tRNA(Cys) + AMP + diphosphate. This chain is Cysteine--tRNA ligase (cysS), found in Chlamydia muridarum (strain MoPn / Nigg).